The sequence spans 55 residues: ATP synthase F(0) complex subunit 8 (55 aa).

A helical membrane pass occupies residues 10–30 (FPIMMLSWLIFSLIIQPKLLL). The disordered stretch occupies residues 35–55 (NPPSNKTTTTTRSNPWTWPWT). Residues 37 to 55 (PSNKTTTTTRSNPWTWPWT) are compositionally biased toward low complexity.

Belongs to the ATPase protein 8 family. In terms of assembly, component of the ATP synthase complex composed at least of ATP5F1A/subunit alpha, ATP5F1B/subunit beta, ATP5MC1/subunit c (homooctomer), MT-ATP6/subunit a, MT-ATP8/subunit 8, ATP5ME/subunit e, ATP5MF/subunit f, ATP5MG/subunit g, ATP5MK/subunit k, ATP5MJ/subunit j, ATP5F1C/subunit gamma, ATP5F1D/subunit delta, ATP5F1E/subunit epsilon, ATP5PF/subunit F6, ATP5PB/subunit b, ATP5PD/subunit d, ATP5PO/subunit OSCP. ATP synthase complex consists of a soluble F(1) head domain (subunits alpha(3) and beta(3)) - the catalytic core - and a membrane F(0) domain - the membrane proton channel (subunits c, a, 8, e, f, g, k and j). These two domains are linked by a central stalk (subunits gamma, delta, and epsilon) rotating inside the F1 region and a stationary peripheral stalk (subunits F6, b, d, and OSCP).

The protein localises to the mitochondrion membrane. In terms of biological role, subunit 8, of the mitochondrial membrane ATP synthase complex (F(1)F(0) ATP synthase or Complex V) that produces ATP from ADP in the presence of a proton gradient across the membrane which is generated by electron transport complexes of the respiratory chain. ATP synthase complex consist of a soluble F(1) head domain - the catalytic core - and a membrane F(1) domain - the membrane proton channel. These two domains are linked by a central stalk rotating inside the F(1) region and a stationary peripheral stalk. During catalysis, ATP synthesis in the catalytic domain of F(1) is coupled via a rotary mechanism of the central stalk subunits to proton translocation. In vivo, can only synthesize ATP although its ATP hydrolase activity can be activated artificially in vitro. Part of the complex F(0) domain. The chain is ATP synthase F(0) complex subunit 8 from Opisthocomus hoazin (Hoatzin).